Here is a 1415-residue protein sequence, read N- to C-terminus: DNA-directed RNA polymerase subunit beta' (1415 aa).

4 residues coordinate Zn(2+): Cys71, Cys73, Cys86, and Cys89. Asp461, Asp463, and Asp465 together coordinate Mg(2+). Zn(2+) contacts are provided by Cys815, Cys889, Cys896, and Cys899.

It belongs to the RNA polymerase beta' chain family. The RNAP catalytic core consists of 2 alpha, 1 beta, 1 beta' and 1 omega subunit. When a sigma factor is associated with the core the holoenzyme is formed, which can initiate transcription. The cofactor is Mg(2+). Zn(2+) is required as a cofactor.

The catalysed reaction is RNA(n) + a ribonucleoside 5'-triphosphate = RNA(n+1) + diphosphate. Its function is as follows. DNA-dependent RNA polymerase catalyzes the transcription of DNA into RNA using the four ribonucleoside triphosphates as substrates. This chain is DNA-directed RNA polymerase subunit beta', found in Haemophilus influenzae (strain ATCC 51907 / DSM 11121 / KW20 / Rd).